The primary structure comprises 277 residues: 4-deoxy-L-threo-5-hexosulose-uronate ketol-isomerase (277 aa).

Zn(2+) contacts are provided by His195, His197, Glu202, and His244.

This sequence belongs to the KduI family. Zn(2+) is required as a cofactor.

It carries out the reaction 5-dehydro-4-deoxy-D-glucuronate = 3-deoxy-D-glycero-2,5-hexodiulosonate. It participates in glycan metabolism; pectin degradation; 2-dehydro-3-deoxy-D-gluconate from pectin: step 4/5. Catalyzes the isomerization of 5-dehydro-4-deoxy-D-glucuronate to 3-deoxy-D-glycero-2,5-hexodiulosonate. In Oceanobacillus iheyensis (strain DSM 14371 / CIP 107618 / JCM 11309 / KCTC 3954 / HTE831), this protein is 4-deoxy-L-threo-5-hexosulose-uronate ketol-isomerase.